A 274-amino-acid chain; its full sequence is Mitochondrial outer membrane protein porin 1 (274 aa).

This sequence belongs to the eukaryotic mitochondrial porin (TC 1.B.8.1) family. In terms of tissue distribution, expressed in shoots and roots. Also expressed in callus, leaves, panicles, sheaths and stems.

The protein localises to the mitochondrion outer membrane. Its function is as follows. Forms a channel through the mitochondrial outer membrane that allows diffusion of small hydrophilic molecules. The channel adopts an open conformation at low or zero membrane potential and a closed conformation at potentials above 30-40 mV. The open state has a weak anion selectivity whereas the closed state is cation-selective. The sequence is that of Mitochondrial outer membrane protein porin 1 (VDAC1) from Oryza sativa subsp. japonica (Rice).